The primary structure comprises 178 residues: Fatty-acid and retinol-binding protein 1 (178 aa).

The N-terminal stretch at 1 to 16 is a signal peptide; it reads MYHQLILMALIGVIMA. 2 coiled-coil regions span residues 67-89 and 122-154; these read DAALEALKNKSDKLYQKAVELRN and QKLDMEKLKQAARDIIAKYEALNEETKEELKAT.

It belongs to the fatty-acid and retinol-binding protein (FARBP) family. Post-translationally, not glycosylated.

It is found in the secreted. Functionally, binds retinol and different fatty acids. The protein is Fatty-acid and retinol-binding protein 1 of Litomosoides sigmodontis (Filarial nematode worm).